We begin with the raw amino-acid sequence, 308 residues long: Probable dimethyladenosine transferase (308 aa).

Residues 1-11 (MGKTSKVKKTK) are compositionally biased toward basic residues. The segment at 1–24 (MGKTSKVKKTKAGSSTGNVQSLPF) is disordered. Residues 12–24 (AGSSTGNVQSLPF) are compositionally biased toward polar residues. 6 residues coordinate S-adenosyl-L-methionine: histidine 31, leucine 33, glycine 58, glutamate 79, aspartate 107, and asparagine 122.

It belongs to the class I-like SAM-binding methyltransferase superfamily. rRNA adenine N(6)-methyltransferase family. As to quaternary structure, part of the small subunit (SSU) processome, composed of more than 70 proteins and the RNA chaperone small nucleolar RNA (snoRNA) U3.

The protein localises to the nucleus. The protein resides in the nucleolus. The enzyme catalyses adenosine(1779)/adenosine(1780) in 18S rRNA + 4 S-adenosyl-L-methionine = N(6)-dimethyladenosine(1779)/N(6)-dimethyladenosine(1780) in 18S rRNA + 4 S-adenosyl-L-homocysteine + 4 H(+). Specifically dimethylates two adjacent adenosines in the loop of a conserved hairpin near the 3'-end of 18S rRNA in the 40S particle. Involved in the pre-rRNA processing steps leading to small-subunit rRNA production independently of its RNA-modifying catalytic activity. Part of the small subunit (SSU) processome, first precursor of the small eukaryotic ribosomal subunit. During the assembly of the SSU processome in the nucleolus, many ribosome biogenesis factors, an RNA chaperone and ribosomal proteins associate with the nascent pre-rRNA and work in concert to generate RNA folding, modifications, rearrangements and cleavage as well as targeted degradation of pre-ribosomal RNA by the RNA exosome. This Caenorhabditis elegans protein is Probable dimethyladenosine transferase.